A 387-amino-acid chain; its full sequence is 8-amino-7-oxononanoate synthase (387 aa).

Residues R31 and R38 each contribute to the substrate site. A pyridoxal 5'-phosphate-binding site is contributed by 118-119; the sequence is GY. Residue H143 participates in substrate binding. Pyridoxal 5'-phosphate-binding positions include S191, 216–219, and 236–239; these read DDAH and TLSK. The residue at position 239 (K239) is an N6-(pyridoxal phosphate)lysine. Residue T348 coordinates substrate.

Belongs to the class-II pyridoxal-phosphate-dependent aminotransferase family. BioF subfamily. Homodimer. Pyridoxal 5'-phosphate is required as a cofactor.

The catalysed reaction is 6-carboxyhexanoyl-[ACP] + L-alanine + H(+) = (8S)-8-amino-7-oxononanoate + holo-[ACP] + CO2. The protein operates within cofactor biosynthesis; biotin biosynthesis. In terms of biological role, catalyzes the decarboxylative condensation of pimeloyl-[acyl-carrier protein] and L-alanine to produce 8-amino-7-oxononanoate (AON), [acyl-carrier protein], and carbon dioxide. The sequence is that of 8-amino-7-oxononanoate synthase from Methylorubrum populi (strain ATCC BAA-705 / NCIMB 13946 / BJ001) (Methylobacterium populi).